The primary structure comprises 861 residues: MISEENFQQHTPMMQQYLKLKAENPDILLFYRMGDFYELFYDDAKKAAALLDISLTKRGQSAGQPIPMAGMPYHAVEGYLAKLVQLGESVAICEQIGDPSTSKGPVERQIVRIVTPGTVSDEALLPERQDNLIAAVYQEKEKFGLATLDMTSGRFQLCEPADKETLRAELQRIVPVELLYCEEFNEMAAIEHCKGLRRRPIWEFELSTAITLLNRQFGTKDLRAFGVEKSPLGLSAAGCLLQYAKETQRTALPHIQSISLIQNQDCIQLDAATRRNLELTQNLSGGTENTLASVLDKCVTPMGSRLLKRWIHQPIRDVEKLKQRQQAIAEILNFDLVDELQPYLQLVGDMERILARVALRSARPRDLTRLRTALEQIPALRTIVQQKTSPFLTALFSQIADFSEQWDLLQRALIETPPLLIRDGGVIAEGYHAELDEWRMLSDGATQYLENLEKRERESTGIDTLKIGFNAVHGYYIQISQGQAHKAPIHYVRRQTLKNAERYIIPELKEYEDKVLKSKGAALALEKQLYDELFDLLLPHLGSLQLASLALSELDVLVNLAECADTLNYVMPTFCDEVSVKIENGRHPVVEQVLKDPFIANPVELNHNRHLLIITGPNMGGKSTYMRQTALITLLAYIGSFVPADSARIGPIDRIFTRIGASDDLASGRSTFMVEMTEMANILHQATEQSLVLIDEIGRGTSTYDGLSLAWACAEWLAKKIRSLTLFATHYFELTALPEQLEGIANIHLDALEHNNSIAFMHAVQDGAASKSYGLAVAALAGVPQSVIKLAKQKLTQLEKNSSYSAEQQIQALREANHNQGELLFEQETDALREAIEKLDPDDLSPKQALAYLYQLKKMVG.

616-623 (GPNMGGKS) is a binding site for ATP.

The protein belongs to the DNA mismatch repair MutS family.

In terms of biological role, this protein is involved in the repair of mismatches in DNA. It is possible that it carries out the mismatch recognition step. This protein has a weak ATPase activity. In Haemophilus influenzae (strain 86-028NP), this protein is DNA mismatch repair protein MutS.